Reading from the N-terminus, the 122-residue chain is Large ribosomal subunit protein uL14 (122 aa).

The protein belongs to the universal ribosomal protein uL14 family. In terms of assembly, part of the 50S ribosomal subunit. Forms a cluster with proteins L3 and L19. In the 70S ribosome, L14 and L19 interact and together make contacts with the 16S rRNA in bridges B5 and B8.

Binds to 23S rRNA. Forms part of two intersubunit bridges in the 70S ribosome. The protein is Large ribosomal subunit protein uL14 of Hydrogenovibrio crunogenus (strain DSM 25203 / XCL-2) (Thiomicrospira crunogena).